A 423-amino-acid polypeptide reads, in one-letter code: MRNYIKDAADLDEVELSGWAEDIRRIKSIVFIILRDVTGRIQVTVKSENVKNFDEVYKINRESVLKVHGTVDHQSRSKSGIEIIADSVEILNAAEAPLPLGVVDKVQADLDTRLNNRYIDLRKDENLIIFKAQSTLLWGIREYLNRLGFIEVHTPKIVAAATEGGADLFPVKYFERDAYLNQSPQLYKEILMAAGFEKVFEVGPAFRAEKENTLRHLNEFTSIDIEMSFADHNDVMDVLENTVKNAINTLKNNLGDELNKHGFNIDSINGRIPRITYREAIDYLNSSGFQMNFGDDFSPEAARVLGERYKSFYFITEWPVSLRPFYTMKKDDETTKSFDLQLRELEICSGAQRIHRYDDLVNNIKNKGLNPESFTFYLSAFRYGMPPHAGWAIGLERLTMNLLGIKNVRETTLFPRDRTRLLP.

Residue Glu-163 coordinates L-aspartate. Positions 185–188 (QLYK) are aspartate. L-aspartate is bound at residue Arg-207. Residues 207–209 (RAE), 215–217 (RHL), and Glu-346 each bind ATP. Mg(2+)-binding residues include Glu-346 and Ser-349. Residues Ser-349 and Arg-353 each coordinate L-aspartate. 394–397 (GLER) provides a ligand contact to ATP.

This sequence belongs to the class-II aminoacyl-tRNA synthetase family. Type 2 subfamily. In terms of assembly, homodimer. Mg(2+) serves as cofactor.

The protein resides in the cytoplasm. The catalysed reaction is tRNA(Asp) + L-aspartate + ATP = L-aspartyl-tRNA(Asp) + AMP + diphosphate. Functionally, catalyzes the attachment of L-aspartate to tRNA(Asp) in a two-step reaction: L-aspartate is first activated by ATP to form Asp-AMP and then transferred to the acceptor end of tRNA(Asp). This Picrophilus torridus (strain ATCC 700027 / DSM 9790 / JCM 10055 / NBRC 100828 / KAW 2/3) protein is Aspartate--tRNA(Asp) ligase.